The chain runs to 386 residues: Na(+)/H(+) antiporter NhaA (386 aa).

10 helical membrane-spanning segments follow: residues 10 to 30 (EFSIPLLAGVLTALVWANVAP), 45 to 65 (LSFHFVTNDIFMAFFFAIAAV), 84 to 104 (LNPLLATAGGVVGPVGVYLAL), 116 to 136 (GWGIPTATDIAFAWLAARLIF), 142 to 162 (VIAFLLLLAIADDAIGLVIIA), 169 to 189 (VLPVAPPWLMLTAAGMLIAFI), 261 to 281 (IIVDFGLFMFGLANAGVGFSA), 287 to 307 (WLVFCALLFGKVTGIFVFALL), 323 to 343 (HLLVAGIIAGIGFTVALFVAG), and 358 to 378 (GAILSIAVFPVAMAAAKLLGI).

The protein belongs to the NhaA Na(+)/H(+) (TC 2.A.33) antiporter family.

The protein localises to the cell inner membrane. It catalyses the reaction Na(+)(in) + 2 H(+)(out) = Na(+)(out) + 2 H(+)(in). Na(+)/H(+) antiporter that extrudes sodium in exchange for external protons. The protein is Na(+)/H(+) antiporter NhaA of Geotalea uraniireducens (strain Rf4) (Geobacter uraniireducens).